Here is a 701-residue protein sequence, read N- to C-terminus: Polyribonucleotide nucleotidyltransferase (701 aa).

2 residues coordinate Mg(2+): Asp-485 and Asp-491. In terms of domain architecture, KH spans 552 to 611 (PRITTLKINPEKIRDVIGKGGATIRALTEETGTTIELEDDGTVKIASSNGEATKEAIRRI). The S1 motif domain occupies 621–689 (GTVYNGKVVR…RQGRVRLSMK (69 aa)).

This sequence belongs to the polyribonucleotide nucleotidyltransferase family. Component of the RNA degradosome, which is a multiprotein complex involved in RNA processing and mRNA degradation. Requires Mg(2+) as cofactor.

The protein resides in the cytoplasm. It carries out the reaction RNA(n+1) + phosphate = RNA(n) + a ribonucleoside 5'-diphosphate. Functionally, involved in mRNA degradation. Catalyzes the phosphorolysis of single-stranded polyribonucleotides processively in the 3'- to 5'-direction. The chain is Polyribonucleotide nucleotidyltransferase from Shewanella piezotolerans (strain WP3 / JCM 13877).